The following is a 521-amino-acid chain: Importin subunit alpha-3 (521 aa).

Ala2 carries the N-acetylalanine modification. One can recognise an IBB domain in the interval 2–58 (ADNEKLDNQRLKNFKNKGRDLETMRRQRNEVVVELRKNKRDEHLLKRRNVPHEDICE). Residues 43 to 52 (EHLLKRRNVP) carry the Nuclear localization signal motif. Ser60 carries the post-translational modification Phosphoserine. An ARM 1; truncated repeat occupies 66–106 (YRVQNTSLEAIVQNASSDNQGIQLSAVQAARKLLSSDRNPP). 8 ARM repeats span residues 107–149 (IDDL…TSEQ), 150–194 (TQAV…CRDY), 195–233 (VISLGVVKPLLSFISPSIPITFLRNVTWVMVNLCRHKDP), 234–278 (PPPM…EQIQ), 279–318 (MVIDSGIVPHLVPLLSHQEVKVQTAALRAVGNIVTGTDEQ), 319–360 (TQVV…NQQQ), 361–400 (VQAVIDANLVPMIIHLLDKGDFGTQKEAAWAISNLTISGR), and 401–443 (KDQV…KMAE). Residues 137–229 (WALTNIASGT…VTWVMVNLCR (93 aa)) form an NLS binding site (major) region. Residues 306 to 394 (RAVGNIVTGT…QKEAAWAISN (89 aa)) form an NLS binding site (minor) region. The ARM 10; atypical repeat unit spans residues 447-485 (ETIGNLIEECGGLEKIEQLQNHENEDIYKLAYEIIDQFF).

Belongs to the importin alpha family. As to quaternary structure, forms a complex with importin subunit beta-1 (KPNB1). Interacts with SNAI1. Interacts with TALDO1 isoform 1. Interacts with CYB1. In terms of assembly, (Microbial infection) Interacts with MERS virus protein OF4b; this interaction prevents the translocation of NF-kappa-B complex to the nucleus. (Microbial infection) Interacts with human adenovirus 5 E1A protein; this interaction allows E1A import into the host nucleus. As to quaternary structure, (Microbial infection) Interacts with Chikungunya virus capsid protein; this interaction allows the nuclear import of the viral capsid protein. As to expression, highly expressed in testis, ovary, small intestine, heart, skeletal muscle, lung and pancreas, but barely detectable in kidney, thymus, colon and peripheral blood leukocytes.

It is found in the cytoplasm. The protein localises to the nucleus. Functionally, functions in nuclear protein import as an adapter protein for nuclear receptor KPNB1. Binds specifically and directly to substrates containing either a simple or bipartite NLS motif. Docking of the importin/substrate complex to the nuclear pore complex (NPC) is mediated by KPNB1 through binding to nucleoporin FxFG repeats and the complex is subsequently translocated through the pore by an energy requiring, Ran-dependent mechanism. At the nucleoplasmic side of the NPC, Ran binds to importin-beta and the three components separate and importin-alpha and -beta are re-exported from the nucleus to the cytoplasm where GTP hydrolysis releases Ran from importin. The directionality of nuclear import is thought to be conferred by an asymmetric distribution of the GTP- and GDP-bound forms of Ran between the cytoplasm and nucleus. Mediates nuclear import of AARS1, MRTFA and RANBP3. (Microbial infection) In vitro, mediates the nuclear import of human cytomegalovirus UL84 by recognizing a non-classical NLS. In vitro, mediates the nuclear import of human cytomegalovirus UL84 by recognizing a non-classical NLS. This chain is Importin subunit alpha-3, found in Homo sapiens (Human).